A 487-amino-acid polypeptide reads, in one-letter code: NADH-quinone oxidoreductase subunit N (487 aa).

A run of 13 helical transmembrane segments spans residues 7-27 (LTLILPEIVMAISAMALILIT), 37-57 (LVSILAAATLGAAAVMVAPAL), 81-101 (FAKILIYLSAIGCLMIAPAFF), 112-132 (PVLVLLATLGMSIMVSAGDLI), 166-186 (FVLGALASGILLYGMSLVYGF), 207-227 (ALFGVIFVLAGLAFKIAAVPF), 237-257 (GAPTPVTTFFATAPKVAAVAL), 276-296 (IVIFAALASIVLGALGAIGQT), 307-327 (INNVGFILIGLAASTVAGLSA), 329-349 (LTYLAIYVVMALGSFVALLML), 373-393 (LAWCLLFLMFSLAGIPPLLGF), 407-427 (DMVLLAALGIAASVIGAFYYI), and 452-472 (VLLILAAVVVSPLGYLLTGWL).

The protein belongs to the complex I subunit 2 family. As to quaternary structure, NDH-1 is composed of 14 different subunits. Subunits NuoA, H, J, K, L, M, N constitute the membrane sector of the complex.

Its subcellular location is the cell inner membrane. It carries out the reaction a quinone + NADH + 5 H(+)(in) = a quinol + NAD(+) + 4 H(+)(out). NDH-1 shuttles electrons from NADH, via FMN and iron-sulfur (Fe-S) centers, to quinones in the respiratory chain. The immediate electron acceptor for the enzyme in this species is believed to be ubiquinone. Couples the redox reaction to proton translocation (for every two electrons transferred, four hydrogen ions are translocated across the cytoplasmic membrane), and thus conserves the redox energy in a proton gradient. The protein is NADH-quinone oxidoreductase subunit N of Erythrobacter litoralis (strain HTCC2594).